A 369-amino-acid chain; its full sequence is Glutamate 5-kinase (369 aa).

An ATP-binding site is contributed by Lys14. 3 residues coordinate substrate: Ser56, Asp143, and Asn155. Residues 175-176 and 215-221 each bind ATP; these read SD and TGGMASK. The 75-residue stretch at 277 to 351 folds into the PUA domain; that stretch reads AGKIRLDQGA…GMKTQELPDD (75 aa).

The protein belongs to the glutamate 5-kinase family.

Its subcellular location is the cytoplasm. The catalysed reaction is L-glutamate + ATP = L-glutamyl 5-phosphate + ADP. It participates in amino-acid biosynthesis; L-proline biosynthesis; L-glutamate 5-semialdehyde from L-glutamate: step 1/2. In terms of biological role, catalyzes the transfer of a phosphate group to glutamate to form L-glutamate 5-phosphate. This Corynebacterium efficiens (strain DSM 44549 / YS-314 / AJ 12310 / JCM 11189 / NBRC 100395) protein is Glutamate 5-kinase.